A 128-amino-acid polypeptide reads, in one-letter code: UPF0325 protein YaeH (128 aa).

The protein belongs to the UPF0325 family.

The protein is UPF0325 protein YaeH of Salmonella agona (strain SL483).